Here is a 505-residue protein sequence, read N- to C-terminus: MVMENPFEGKEIWFGVGSQDLYGEEALRQVAIHSAEMVDYLNNTGKIPAKIVLKPTLKSSDGVKEFMVEASANPNVIGVITWCHTFSPAKMWIRGLEVLTKPLLQLATQHHKEIPWETIDMDFMNLNQAAHGDREFGYIVSRLGIKRKVVVGHYTDPEVAEKLGTWARACAGWDASNNMKVMRWGDNMRNVAVTEGDKTEAERVFGASINTWAVNELVAAYDAVKDDQVKEIIEDYKAKYDVDPALLDAKYDSLFIAAKEEAAMVNMMRANGCTAGVDNFEDLGALPQLPGVGPQRFPSEYGWGFSAEGDWKTAVLVRIGAVMGYGLEGGASLMEDYSYNFTEGDELDMGSHMLEVSPSIGTIAKPKLEIHPLGIGGKADPVRLVFSGKPAKDAVVVSMSDVRERFRLLMDVVDVVEPQGSLKELPCARAVWEPKPSLKTAVECWITAGGSHHTCMTTSVGREAWEDFARIAGVELAVIDENTTARQFEKELELSEMYHRLNNQH.

The Mn(2+) site is built by E308, E335, H352, and H453.

This sequence belongs to the arabinose isomerase family. Requires Mn(2+) as cofactor.

The enzyme catalyses beta-L-arabinopyranose = L-ribulose. It participates in carbohydrate degradation; L-arabinose degradation via L-ribulose; D-xylulose 5-phosphate from L-arabinose (bacterial route): step 1/3. Catalyzes the conversion of L-arabinose to L-ribulose. The polypeptide is L-arabinose isomerase (Bifidobacterium longum (strain DJO10A)).